The chain runs to 126 residues: Holo-[acyl-carrier-protein] synthase (126 aa).

Mg(2+) is bound by residues aspartate 9 and glutamate 58.

It belongs to the P-Pant transferase superfamily. AcpS family. Requires Mg(2+) as cofactor.

The protein resides in the cytoplasm. The enzyme catalyses apo-[ACP] + CoA = holo-[ACP] + adenosine 3',5'-bisphosphate + H(+). Transfers the 4'-phosphopantetheine moiety from coenzyme A to a Ser of acyl-carrier-protein. In Vibrio parahaemolyticus serotype O3:K6 (strain RIMD 2210633), this protein is Holo-[acyl-carrier-protein] synthase.